Consider the following 388-residue polypeptide: S-adenosylmethionine synthase (388 aa).

Residue H14 participates in ATP binding. D16 lines the Mg(2+) pocket. E42 contacts K(+). Residues E55 and Q98 each contribute to the L-methionine site. A flexible loop region spans residues 98 to 108 (QSAEISSAVDQ). ATP is bound by residues 166-168 (DGK), D242, 248-249 (RK), A265, and K269. D242 is a binding site for L-methionine. K273 is a binding site for L-methionine.

Belongs to the AdoMet synthase family. In terms of assembly, homotetramer; dimer of dimers. Mg(2+) serves as cofactor. It depends on K(+) as a cofactor.

The protein resides in the cytoplasm. It carries out the reaction L-methionine + ATP + H2O = S-adenosyl-L-methionine + phosphate + diphosphate. The protein operates within amino-acid biosynthesis; S-adenosyl-L-methionine biosynthesis; S-adenosyl-L-methionine from L-methionine: step 1/1. Its function is as follows. Catalyzes the formation of S-adenosylmethionine (AdoMet) from methionine and ATP. The overall synthetic reaction is composed of two sequential steps, AdoMet formation and the subsequent tripolyphosphate hydrolysis which occurs prior to release of AdoMet from the enzyme. The protein is S-adenosylmethionine synthase of Oenococcus oeni (strain ATCC BAA-331 / PSU-1).